Consider the following 338-residue polypeptide: Lipoyl synthase (338 aa).

The disordered stretch occupies residues 1–22; that stretch reads MTTVQEAVPNLIPTQDVTPRPA. Positions 84, 89, 95, 110, 114, 117, and 324 each coordinate [4Fe-4S] cluster. The 218-residue stretch at 96–313 folds into the Radical SAM core domain; sequence FSGGTATFMI…AEEGYKMGFK (218 aa).

Belongs to the radical SAM superfamily. Lipoyl synthase family. It depends on [4Fe-4S] cluster as a cofactor.

It localises to the cytoplasm. It carries out the reaction [[Fe-S] cluster scaffold protein carrying a second [4Fe-4S](2+) cluster] + N(6)-octanoyl-L-lysyl-[protein] + 2 oxidized [2Fe-2S]-[ferredoxin] + 2 S-adenosyl-L-methionine + 4 H(+) = [[Fe-S] cluster scaffold protein] + N(6)-[(R)-dihydrolipoyl]-L-lysyl-[protein] + 4 Fe(3+) + 2 hydrogen sulfide + 2 5'-deoxyadenosine + 2 L-methionine + 2 reduced [2Fe-2S]-[ferredoxin]. Its pathway is protein modification; protein lipoylation via endogenous pathway; protein N(6)-(lipoyl)lysine from octanoyl-[acyl-carrier-protein]: step 2/2. In terms of biological role, catalyzes the radical-mediated insertion of two sulfur atoms into the C-6 and C-8 positions of the octanoyl moiety bound to the lipoyl domains of lipoate-dependent enzymes, thereby converting the octanoylated domains into lipoylated derivatives. The chain is Lipoyl synthase from Pseudomonas entomophila (strain L48).